We begin with the raw amino-acid sequence, 431 residues long: Intraflagellar transport protein 38 (431 aa).

Positions 177 to 218 (SAAVQQRIKNLAAECNTLQEEVTTNKREKAKLEEQITQKKQS) form a coiled coil. A disordered region spans residues 346-431 (INTNAEIPDD…EELDPDNIEF (86 aa)). Over residues 352–370 (IPDDESYSYSYEEEEEEEQ) the composition is skewed to acidic residues. Over residues 384–405 (PETHSNGEKHRGLDELSHKSNE) the composition is skewed to basic and acidic residues. Acidic residues predominate over residues 420–431 (GGEELDPDNIEF).

Belongs to the CLUAP1 family.

The protein localises to the cell projection. It localises to the cilium. Its subcellular location is the flagellum. The protein resides in the cytoplasm. It is found in the cytoskeleton. The protein localises to the flagellum axoneme. It localises to the flagellum basal body. Its function is as follows. Component of the intraflagellar transport complex B (IFT-B) involved in flagellar assembly. This is Intraflagellar transport protein 38 from Giardia intestinalis (strain ATCC 50803 / WB clone C6) (Giardia lamblia).